A 61-amino-acid chain; its full sequence is Small ribosomal subunit protein uS14 (61 aa).

Residues Cys-24, Cys-27, Cys-40, and Cys-43 each contribute to the Zn(2+) site.

Belongs to the universal ribosomal protein uS14 family. Zinc-binding uS14 subfamily. As to quaternary structure, part of the 30S ribosomal subunit. Contacts proteins S3 and S10. The cofactor is Zn(2+).

Binds 16S rRNA, required for the assembly of 30S particles and may also be responsible for determining the conformation of the 16S rRNA at the A site. The sequence is that of Small ribosomal subunit protein uS14 from Anaeromyxobacter dehalogenans (strain 2CP-1 / ATCC BAA-258).